The primary structure comprises 504 residues: Maturase K (504 aa).

It belongs to the intron maturase 2 family. MatK subfamily.

It is found in the plastid. It localises to the chloroplast. Its function is as follows. Usually encoded in the trnK tRNA gene intron. Probably assists in splicing its own and other chloroplast group II introns. This is Maturase K from Arabidopsis thaliana (Mouse-ear cress).